Consider the following 403-residue polypeptide: MTEIRRIQDADVAGKRVLVRVDFNVPMKDGQVTDATRLEAALPTIEYLTEAGAKVVLLAHFGRPKGAVVPEMSLEAVCQPLADLLGDAVYFSTVTSGEDAVAATMDLEAGEVLLIENTRFAAGEETNDPGFAAALAELGDLYVNDAFSAAHRAHASTEGITHHLPSYAGLALQREIDHLVAALESPKRPVIALVGGAKVSTKIDLLQNLVKKVDTLFVGGGMANTLLHAQGIKVGSSLCETDLVDTARAIFAAAEESGCKLMLPTDVVLAKEFKPNPETRLAAVTDVEDNEMILDCGPATVVALGQAIDRSATLIWNGPLGAFETPPFDAATVEAAKYAARAAVEGELIAVAGGGDTVSALNQAGVSGDFTFISTAGGAFLEWMEGKTLPGIAAVMGTPELVA.

Residues 22–24, Arg-37, 60–63, Arg-119, and Arg-152 contribute to the substrate site; these read DFN and HFGR. Residues Lys-202, Glu-324, and 354–357 each bind ATP; that span reads GGDT.

This sequence belongs to the phosphoglycerate kinase family. In terms of assembly, monomer.

It is found in the cytoplasm. The catalysed reaction is (2R)-3-phosphoglycerate + ATP = (2R)-3-phospho-glyceroyl phosphate + ADP. It functions in the pathway carbohydrate degradation; glycolysis; pyruvate from D-glyceraldehyde 3-phosphate: step 2/5. The chain is Phosphoglycerate kinase from Maricaulis maris (strain MCS10) (Caulobacter maris).